The sequence spans 323 residues: Ferrochelatase (323 aa).

H196 and E277 together coordinate Fe cation.

This sequence belongs to the ferrochelatase family.

It is found in the cytoplasm. It carries out the reaction heme b + 2 H(+) = protoporphyrin IX + Fe(2+). The protein operates within porphyrin-containing compound metabolism; protoheme biosynthesis; protoheme from protoporphyrin-IX: step 1/1. In terms of biological role, catalyzes the ferrous insertion into protoporphyrin IX. The chain is Ferrochelatase from Haemophilus influenzae (strain ATCC 51907 / DSM 11121 / KW20 / Rd).